Consider the following 382-residue polypeptide: Kelch domain-containing protein 3 (382 aa).

Kelch repeat units lie at residues 25 to 77 (RVYS…PYMR), 88 to 138 (TVFL…VLGK), 139 to 189 (TMYI…TMLG), 191 to 249 (HMYV…GYNG), and 251 to 301 (LYIF…IVGD).

Component of a CRL2(KLHDC3) complex, also named ECS(KLHDC3) complex, composed of CUL2, Elongin BC (ELOB and ELOC), RBX1 and substrate-specific adapter KLHDC3. May form oligomers as a KLHDC3-ELOB-ELOC complex; this interaction is likely autoinhibitory for the E3 ligase complex.

It localises to the cytoplasm. It participates in protein modification; protein ubiquitination. Its function is as follows. Substrate-recognition component of a Cul2-RING (CRL2) E3 ubiquitin-protein ligase complex of the DesCEND (destruction via C-end degrons) pathway, which recognizes a C-degron located at the extreme C terminus of target proteins, leading to their ubiquitination and degradation. The C-degron recognized by the DesCEND pathway is usually a motif of less than ten residues and can be present in full-length proteins, truncated proteins or proteolytically cleaved forms. The CRL2(KLHDC3) complex specifically recognizes proteins with a glycine (Gly) at the C-terminus, leading to their ubiquitination and degradation: recognizes the C-terminal -Arg-(Xaa)n-Arg-Gly, -Arg-(Xaa)n-Lys-Gly, and -Arg-(Xaa)n-Gln-Gly degrons. The CRL2(KLHDC3) complex mediates ubiquitination and degradation of truncated SELENOV and SEPHS2 selenoproteins produced by failed UGA/Sec decoding, which end with a glycine. May be involved in meiotic recombination process. This Bos taurus (Bovine) protein is Kelch domain-containing protein 3.